The sequence spans 615 residues: MALLQIAEPGQSAAPHQHKRAVGIDLGTTNSLVAAVRSGHADTLCDEQGRDLLPSVVHYQVDAIRVGFDAKREASLDPHNTIVSAKRMMGKALADIDTRQQPYEFVAADNGMPQLQTRQGLVNPVQVSAEILKKLAERGAAALGGELDGVVITVPAYFDDAQRQGTKDAARLAGLHVLRLLNEPTAAAIAYGLDSGQEGVIAVYDLGGGTFDISILRLHRGVFEVMATGGDSALGGDDFDHLLADWIKAQAGLEGQLDASTQRELLDVAAAVKHGLTDADLVPCAFAGWQGEVSRHLFEELITPLVKRTLLACRRALRDAGLEQVEVLEVVMVGGSTRVPLVRERVGEFFQRTPLTSIDPDKVVAIGAAIQADILVGNKPDAEMLLLDVIPLSLGLETMGGLAEKVIPRNTTIPVARAQEFTTFKDGQTAMAIHVVQGERELVADCRSLARFTLTGIPPMAAGAAHIRVTFQVDADGLLSVSAMEKSSGVQAEIQVKPSYGLGEEDILTMLSASIANAQQDMDARMLAEQQVEADRVVESLNAALAADGDALLSTAERAAIDSAITHVLSVRAAGTTNQIKDAIEAADAVSGEFAARRMDASIRKVLTGQNVNKV.

This sequence belongs to the heat shock protein 70 family.

In terms of biological role, chaperone involved in the maturation of iron-sulfur cluster-containing proteins. Has a low intrinsic ATPase activity which is markedly stimulated by HscB. The polypeptide is Chaperone protein HscA homolog (Aeromonas salmonicida (strain A449)).